The primary structure comprises 468 residues: Beta-monoglucosyldiacylglycerol synthase (468 aa).

4 helical membrane passes run 51 to 71, 72 to 92, 361 to 381, and 387 to 407; these read AALV…VSWG, SIFI…VVFA, FMLT…MAVV, and MLGP…FAGL.

This sequence belongs to the glycosyltransferase 2 family. Mg(2+) serves as cofactor.

The protein resides in the membrane. It carries out the reaction a 1,2-diacyl-sn-glycerol + UDP-alpha-D-glucose = a 1,2-diacyl-3-O-(beta-D-glucopyranosyl)-sn-glycerol + UDP + H(+). Functionally, glucosyltransferase involved in the biosynthesis of the non-bilayer-forming membrane lipid beta-monoglucosyldiacylglycerol which contributes to regulate the properties and stability of the membrane. Catalyzes the transfer of a glucosyl residue from UDP-Glc to diacylglycerol (DAG) acceptor to form the corresponding beta-glucosyl-DAG (1,2-diacyl-3-O-(beta-D-glucopyranosyl)-sn-glycerol). It can only use UDP-Glc as sugar donor. The sequence is that of Beta-monoglucosyldiacylglycerol synthase from Trichormus variabilis (strain ATCC 29413 / PCC 7937) (Anabaena variabilis).